Reading from the N-terminus, the 209-residue chain is 3-demethoxyubiquinol 3-hydroxylase (209 aa).

Fe cation-binding residues include glutamate 58, glutamate 88, histidine 91, glutamate 140, glutamate 172, and histidine 175.

Belongs to the COQ7 family. Fe cation is required as a cofactor.

The protein localises to the cell membrane. The catalysed reaction is a 5-methoxy-2-methyl-3-(all-trans-polyprenyl)benzene-1,4-diol + AH2 + O2 = a 3-demethylubiquinol + A + H2O. The protein operates within cofactor biosynthesis; ubiquinone biosynthesis. Catalyzes the hydroxylation of 2-nonaprenyl-3-methyl-6-methoxy-1,4-benzoquinol during ubiquinone biosynthesis. This Polaromonas naphthalenivorans (strain CJ2) protein is 3-demethoxyubiquinol 3-hydroxylase.